The primary structure comprises 229 residues: ATPase SWSAP1 (229 aa).

The segment at 209 to 229 is disordered; the sequence is PWPTQAGDPSSGKGSSSGGQP.

In terms of assembly, interacts with ZSWIM7; they form a functional complex involved in homologous recombination repair and stabilize each other. Interacts with RAD51, RAD51B, RAD51C, RAD51D and XRCC3; involved in homologous recombination repair.

The protein resides in the nucleus. Its function is as follows. ATPase which is preferentially stimulated by single-stranded DNA and is involved in homologous recombination repair (HRR). Has a DNA-binding activity which is independent of its ATPase activity. The sequence is that of ATPase SWSAP1 (SWSAP1) from Homo sapiens (Human).